Reading from the N-terminus, the 314-residue chain is Ornithine carbamoyltransferase (314 aa).

Carbamoyl phosphate contacts are provided by residues 58 to 61 (STRT), Q85, R109, and 136 to 139 (HPLQ). L-ornithine-binding positions include N168, D232, and 236 to 237 (SM). Residues 272-273 (CL) and R300 contribute to the carbamoyl phosphate site.

Belongs to the aspartate/ornithine carbamoyltransferase superfamily. OTCase family.

It localises to the cytoplasm. The catalysed reaction is carbamoyl phosphate + L-ornithine = L-citrulline + phosphate + H(+). Its pathway is amino-acid biosynthesis; L-arginine biosynthesis; L-arginine from L-ornithine and carbamoyl phosphate: step 1/3. Reversibly catalyzes the transfer of the carbamoyl group from carbamoyl phosphate (CP) to the N(epsilon) atom of ornithine (ORN) to produce L-citrulline. In Hyperthermus butylicus (strain DSM 5456 / JCM 9403 / PLM1-5), this protein is Ornithine carbamoyltransferase.